The sequence spans 358 residues: Guanidino acid hydrolase, mitochondrial (358 aa).

A mitochondrion-targeting transit peptide spans 1–36 (MLRLLRSSWARGLGSGVATWRPSAGLFRPGCPGIRQ). The tract at residues 31 to 56 (CPGIRQASGASDTPHHQSPSSESPVQ) is disordered. The segment covering 46–56 (HQSPSSESPVQ) has biased composition (low complexity). Residues Gln168 and His193 each coordinate Mn(2+). Lys199 is subject to N6-acetyllysine. The residue at position 223 (Lys223) is an N6-acetyllysine; alternate. Position 223 is an N6-succinyllysine; alternate (Lys223). Position 284 (Asp284) interacts with Mn(2+).

It belongs to the arginase family. Agmatinase subfamily. The cofactor is Mn(2+). As to expression, detected only in liver.

The protein resides in the mitochondrion. It catalyses the reaction 3-guanidinopropanoate + H2O = urea + beta-alanine. The catalysed reaction is 4-guanidinobutanoate + H2O = urea + 4-aminobutanoate. The enzyme catalyses taurocyamine + H2O = urea + taurine. It carries out the reaction L-arginine + H2O = urea + L-ornithine. It participates in nitrogen metabolism; urea cycle; L-ornithine and urea from L-arginine: step 1/1. Functionally, hydrolyzes linear guanidino acids to form urea and the corresponding amines. Displays specificity for substrates having a negatively charged head group and short chains including taurocyamine, guanidino propanoic and butanoic acids. May protect cells by detoxifying potentially harmful amounts of guanidino acids. Metabolizes L-arginine with low efficiency. The sequence is that of Guanidino acid hydrolase, mitochondrial (Agmat) from Mus musculus (Mouse).